We begin with the raw amino-acid sequence, 288 residues long: Small ribosomal subunit protein uS3 (288 aa).

One can recognise a KH type-2 domain in the interval 39-107 (VREYLKAKLK…PVAVNIEEVR (69 aa)). The tract at residues 209–288 (GRNDLPAAET…AAAAADGKGE (80 aa)) is disordered. Residues 219–238 (PRPEEERRPRGPRRDGRPGD) are compositionally biased toward basic and acidic residues. Over residues 277–288 (APAAAAADGKGE) the composition is skewed to low complexity.

It belongs to the universal ribosomal protein uS3 family. Part of the 30S ribosomal subunit. Forms a tight complex with proteins S10 and S14.

Binds the lower part of the 30S subunit head. Binds mRNA in the 70S ribosome, positioning it for translation. This chain is Small ribosomal subunit protein uS3, found in Acidovorax sp. (strain JS42).